Consider the following 273-residue polypeptide: UPF0380 protein YubP (273 aa).

The protein belongs to the UPF0380 family.

The polypeptide is UPF0380 protein YubP (yubP) (Escherichia coli (strain K12)).